Consider the following 290-residue polypeptide: Agmatinase (290 aa).

The Mn(2+) site is built by H112, D135, H137, D139, D216, and D218.

This sequence belongs to the arginase family. Agmatinase subfamily. Mn(2+) serves as cofactor.

The catalysed reaction is agmatine + H2O = urea + putrescine. The protein operates within amine and polyamine biosynthesis; putrescine biosynthesis via agmatine pathway; putrescine from agmatine: step 1/1. Functionally, catalyzes the formation of putrescine from agmatine. The sequence is that of Agmatinase (speB) from Bacillus anthracis.